Consider the following 331-residue polypeptide: MIARIWSGRSPLYLLLLPLSWLYGLVALLRRQAYRRGWIRVWRAPLPLVVVGNLTAGGNGKTPLVIWLVEQLQRRGYRVGVVSRGYGGRATCYPLVLGPDTRSVECGDEPLLIAQRTGARVAVAPQRSAAVQALLAQEPLDVVITDDGLQHYALARDMELVVIDGERRFGNGWWLPAGPMRERAARLCSVDAVIVNGGLPRTGEIPMALTGHTLVNLRSGERRVAGQFVTPVVAMAGIGHPPRFFHTLTQLGIPLQATHAFADHQAYQAQVLAALTPQAQPLLMTEKDAVKCRAFAQDNWWYLPVSATLPAEAGDRLLARIAALVAAQPRG.

55-62 contributes to the ATP binding site; sequence TAGGNGKT.

It belongs to the LpxK family.

It carries out the reaction a lipid A disaccharide + ATP = a lipid IVA + ADP + H(+). It functions in the pathway glycolipid biosynthesis; lipid IV(A) biosynthesis; lipid IV(A) from (3R)-3-hydroxytetradecanoyl-[acyl-carrier-protein] and UDP-N-acetyl-alpha-D-glucosamine: step 6/6. Transfers the gamma-phosphate of ATP to the 4'-position of a tetraacyldisaccharide 1-phosphate intermediate (termed DS-1-P) to form tetraacyldisaccharide 1,4'-bis-phosphate (lipid IVA). This is Tetraacyldisaccharide 4'-kinase from Edwardsiella ictaluri (strain 93-146).